The sequence spans 575 residues: Urease subunit alpha (575 aa).

Residues 137–575 (GGIDSHIHWI…LPMAQRYFLF (439 aa)) enclose the Urease domain. Positions 142, 144, and 225 each coordinate Ni(2+). Lys225 bears the N6-carboxylysine mark. Residue His227 participates in substrate binding. Ni(2+) contacts are provided by His254 and His280. His328 (proton donor) is an active-site residue. Residue Asp368 coordinates Ni(2+).

Belongs to the metallo-dependent hydrolases superfamily. Urease alpha subunit family. As to quaternary structure, heterotrimer of UreA (gamma), UreB (beta) and UreC (alpha) subunits. Three heterotrimers associate to form the active enzyme. Ni cation serves as cofactor. Carboxylation allows a single lysine to coordinate two nickel ions.

It is found in the cytoplasm. It catalyses the reaction urea + 2 H2O + H(+) = hydrogencarbonate + 2 NH4(+). Its pathway is nitrogen metabolism; urea degradation; CO(2) and NH(3) from urea (urease route): step 1/1. This chain is Urease subunit alpha, found in Leptothrix cholodnii (strain ATCC 51168 / LMG 8142 / SP-6) (Leptothrix discophora (strain SP-6)).